Reading from the N-terminus, the 195-residue chain is Holliday junction branch migration complex subunit RuvA (195 aa).

Residues 1-66 (MNYLVFKVIY…LIIKDLYGFR (66 aa)) are domain I. A domain II region spans residues 67 to 141 (TYNERLLFID…KYINKVSEKN (75 aa)). N141 is a region of interest (flexible linker). Residues 141-195 (NPWAKELSIGLENLGYDKKDIEYAITKVKVDTQQNIDISEIIGCAIKEISLRHEN) form a domain III region.

It belongs to the RuvA family. Homotetramer. Forms an RuvA(8)-RuvB(12)-Holliday junction (HJ) complex. HJ DNA is sandwiched between 2 RuvA tetramers; dsDNA enters through RuvA and exits via RuvB. An RuvB hexamer assembles on each DNA strand where it exits the tetramer. Each RuvB hexamer is contacted by two RuvA subunits (via domain III) on 2 adjacent RuvB subunits; this complex drives branch migration. In the full resolvosome a probable DNA-RuvA(4)-RuvB(12)-RuvC(2) complex forms which resolves the HJ.

It is found in the cytoplasm. Functionally, the RuvA-RuvB-RuvC complex processes Holliday junction (HJ) DNA during genetic recombination and DNA repair, while the RuvA-RuvB complex plays an important role in the rescue of blocked DNA replication forks via replication fork reversal (RFR). RuvA specifically binds to HJ cruciform DNA, conferring on it an open structure. The RuvB hexamer acts as an ATP-dependent pump, pulling dsDNA into and through the RuvAB complex. HJ branch migration allows RuvC to scan DNA until it finds its consensus sequence, where it cleaves and resolves the cruciform DNA. In Ureaplasma urealyticum serovar 10 (strain ATCC 33699 / Western), this protein is Holliday junction branch migration complex subunit RuvA.